Reading from the N-terminus, the 264-residue chain is NAD kinase (264 aa).

D45 functions as the Proton acceptor in the catalytic mechanism. NAD(+) contacts are provided by residues 45-46 (DG), 121-122 (NE), R147, D149, A184, and Q221.

This sequence belongs to the NAD kinase family. A divalent metal cation serves as cofactor.

The protein resides in the cytoplasm. It catalyses the reaction NAD(+) + ATP = ADP + NADP(+) + H(+). Functionally, involved in the regulation of the intracellular balance of NAD and NADP, and is a key enzyme in the biosynthesis of NADP. Catalyzes specifically the phosphorylation on 2'-hydroxyl of the adenosine moiety of NAD to yield NADP. This Leuconostoc mesenteroides subsp. mesenteroides (strain ATCC 8293 / DSM 20343 / BCRC 11652 / CCM 1803 / JCM 6124 / NCDO 523 / NBRC 100496 / NCIMB 8023 / NCTC 12954 / NRRL B-1118 / 37Y) protein is NAD kinase.